Here is a 387-residue protein sequence, read N- to C-terminus: Signal-regulatory protein gamma (387 aa).

The N-terminal stretch at Met1–Gly28 is a signal peptide. The 109-residue stretch at Glu29 to Gly137 folds into the Ig-like V-type domain. The Extracellular portion of the chain corresponds to Glu29–Pro360. Intrachain disulfides connect Cys53/Cys119 and Cys168/Cys226. Ig-like C1-type domains follow at residues Pro146–Ser245 and Pro252–Ser340. Residues Asn243, Asn268, Asn309, and Asn317 are each glycosylated (N-linked (GlcNAc...) asparagine). Cys271 and Cys329 are oxidised to a cystine. The chain crosses the membrane as a helical span at residues Gly361–Trp383. Residues Lys384–Thr387 are Cytoplasmic-facing.

As to quaternary structure, interacts with CD47. Detected in liver, and at very low levels in brain, heart, lung, pancreas, kidney, placenta and skeletal muscle. Expressed on CD4+ T-cells, CD8+ T-cells, CD56-bright natural killer (NK) cells, CD20+ cells, and all activated NK cells. Mainly present in the paracortical T-cell area of lymph nodes, with only sparse positive cells in the mantle and in the germinal center of B-cell follicles. In the thymus, primarily expressed in the medulla on mature T-lymphocytes that have undergone thymic selection.

It localises to the membrane. Probable immunoglobulin-like cell surface receptor. On binding with CD47, mediates cell-cell adhesion. Engagement on T-cells by CD47 on antigen-presenting cells results in enhanced antigen-specific T-cell proliferation and costimulates T-cell activation. The polypeptide is Signal-regulatory protein gamma (SIRPG) (Homo sapiens (Human)).